A 1079-amino-acid chain; its full sequence is Zn(2)-C6 fungal-type transcription factor FTF1a (1079 aa).

A DNA-binding region (zn(2)-C6 fungal-type) is located at residues 177–204 (CIACRRKKIRCSGEKPACKQCLHSCIPC).

It is found in the nucleus. In terms of biological role, zn(2)-C6 fungal-type transcription factor that has a role in the establishment of the fungus within the plant and/or the progress of the disease. Regulates the expression of virulence factors such as SIX1 and SIX6. The sequence is that of Zn(2)-C6 fungal-type transcription factor FTF1a from Fusarium oxysporum f. sp. lycopersici (strain 4287 / CBS 123668 / FGSC 9935 / NRRL 34936) (Fusarium vascular wilt of tomato).